We begin with the raw amino-acid sequence, 91 residues long: Small membrane A-kinase anchor protein (91 aa).

Gly2 carries N-myristoyl glycine lipidation.

It belongs to the small membrane AKAP family. May be palmitoylated at Cys-3.

The protein resides in the cell membrane. Its function is as follows. Binds to type I regulatory subunits of protein kinase A and may anchor/target them to the plasma membrane. This chain is Small membrane A-kinase anchor protein, found in Xenopus tropicalis (Western clawed frog).